We begin with the raw amino-acid sequence, 302 residues long: CASP-like protein 4A2 (302 aa).

Over residues 1-13 the composition is skewed to polar residues; sequence MALQAQQQATPSP. The disordered stretch occupies residues 1–134; sequence MALQAQQQAT…APPPHAQVRS (134 aa). At 1-154 the chain is on the cytoplasmic side; it reads MALQAQQQAT…RKRRAAVMQR (154 aa). The segment covering 40–60 has biased composition (low complexity); that stretch reads VVVASTHHAAAAARYVPPRAT. Residues 99–129 show a composition bias toward pro residues; sequence KTPPPAPPLPAAPPPPPAASPAPAPRAPPPH. Residues 155-175 traverse the membrane as a helical segment; that stretch reads AALLARAAAAGLCLAALAVLA. The Extracellular segment spans residues 176-197; that stretch reads SDTRRGWARDSYSNYAQFRYSE. Residues 198-218 traverse the membrane as a helical segment; that stretch reads AVNVVGFLYSVFQFVALAELM. The Cytoplasmic segment spans residues 219–238; that stretch reads RRNKHLIPHPKRDLFDFTMD. Residues 239–256 form a helical membrane-spanning segment; sequence QVVAYLLISSSSSATARA. At 257-273 the chain is on the extracellular side; the sequence is SDLIENWGSDSFPSMAN. A helical membrane pass occupies residues 274–294; sequence GSIAISFVAFVVFAICSLISA. The Cytoplasmic portion of the chain corresponds to 295–302; the sequence is YNLFRRDM.

Belongs to the Casparian strip membrane proteins (CASP) family. In terms of assembly, homodimer and heterodimers.

Its subcellular location is the cell membrane. The protein is CASP-like protein 4A2 of Zea mays (Maize).